The sequence spans 92 residues: Small ribosomal subunit protein bS20 (92 aa).

It belongs to the bacterial ribosomal protein bS20 family.

Functionally, binds directly to 16S ribosomal RNA. This Methylacidiphilum infernorum (isolate V4) (Methylokorus infernorum (strain V4)) protein is Small ribosomal subunit protein bS20.